The chain runs to 209 residues: uncharacterized protein (209 aa).

The 67-residue stretch at Met1–Asp67 folds into the MPN domain. Positions 17, 19, and 30 each coordinate Zn(2+). A JAMM motif motif is present at residues His17–Asp30.

This is an uncharacterized protein from Acidianus convivator (ATV).